The chain runs to 444 residues: tRNA (guanine-N(7)-)-methyltransferase non-catalytic subunit TRM82 (444 aa).

7 WD repeats span residues 1 to 47, 48 to 99, 100 to 147, 148 to 192, 193 to 237, 238 to 279, and 308 to 354; these read MSVI…WSDD, FDKI…LGAP, PIYS…KRFC, FSKR…EPIL, GHVS…DKWL, FGHK…STFD, and FAVS…ITFP. The tract at residues 55-92 is disordered; that stretch reads RNTTAKEQQGQSSENENENKKLKSNKGDSIKRTAAKVP. Positions 71-85 are enriched in basic and acidic residues; it reads NENKKLKSNKGDSIK. Phosphoserine is present on Ser93.

Belongs to the WD repeat TRM82 family. Forms a heterodimer with the catalytic subunit TRM8.

It localises to the nucleus. It participates in tRNA modification; N(7)-methylguanine-tRNA biosynthesis. In terms of biological role, required for the formation of N(7)-methylguanine at position 46 (m7G46) in tRNA, a modification required to maintain stability of tRNAs; its absence resulting in tRNA decay. In the complex, it is required to stabilize and induce conformational changes of the catalytic subunit. This is tRNA (guanine-N(7)-)-methyltransferase non-catalytic subunit TRM82 from Saccharomyces cerevisiae (strain RM11-1a) (Baker's yeast).